The following is a 483-amino-acid chain: MTSIRQLHQQLVNKEKTAVEIATEFLARIQALEPQVKSFLHLTPDLALAQAQKVDEKIARGESLHLLAGIPIALKDNLCTKGIPTTCASRILENFVPPYESTVTQKLRDLGAVIVGKTNLDEFAMGSSTENSGYHVTANPWDLSRVPGGSSGGSAAAVAAQECVVALGSDTGGSIRQPASFCGVVGLKPTYGLVSRFGLVAYASSLDQIGPFGRTVEDAAILLQAIAGYDPQDSTSLNLPIPDYSQFLKTSLKGLKIGVIKETFGEGLDQVVAEAVNQALAQLKALGATIKEISCPRFRYGLPTYYIIAPSEASANLARYDGVKYGIREDADSLIDMYTKTRAKGFGAEVKRRIMLGTYTLSAGYYDAYYLKAQKVRTLIKEDFDRAFQSVDVLVSPTSPTTAFKAGEKTADPLSMYLSDLMTIPVNLAGLPGLSLPCGFDGQGLPIGLQLVGNVLREDQLFHVAHAYEQATDWHKRQPSFTN.

Catalysis depends on charge relay system residues Lys75 and Ser150. The active-site Acyl-ester intermediate is Ser174.

The protein belongs to the amidase family. GatA subfamily. As to quaternary structure, heterotrimer of A, B and C subunits.

The enzyme catalyses L-glutamyl-tRNA(Gln) + L-glutamine + ATP + H2O = L-glutaminyl-tRNA(Gln) + L-glutamate + ADP + phosphate + H(+). Allows the formation of correctly charged Gln-tRNA(Gln) through the transamidation of misacylated Glu-tRNA(Gln) in organisms which lack glutaminyl-tRNA synthetase. The reaction takes place in the presence of glutamine and ATP through an activated gamma-phospho-Glu-tRNA(Gln). This Microcystis aeruginosa (strain NIES-843 / IAM M-2473) protein is Glutamyl-tRNA(Gln) amidotransferase subunit A.